The chain runs to 101 residues: Chaperone modulatory protein CbpM (101 aa).

Belongs to the CbpM family.

Functionally, interacts with CbpA and inhibits both the DnaJ-like co-chaperone activity and the DNA binding activity of CbpA. Together with CbpA, modulates the activity of the DnaK chaperone system. Does not inhibit the co-chaperone activity of DnaJ. The polypeptide is Chaperone modulatory protein CbpM (Salmonella arizonae (strain ATCC BAA-731 / CDC346-86 / RSK2980)).